The following is a 747-amino-acid chain: Probable alpha-galactosidase C (747 aa).

An N-terminal signal peptide occupies residues 1-24; the sequence is MVAFMNSATFVAGLFTLWSRPIWA. N-linked (GlcNAc...) asparagine glycosylation is found at Asn-36, Asn-182, Asn-190, Asn-362, Asn-429, and Asn-449. Asp-507 acts as the Nucleophile in catalysis. N-linked (GlcNAc...) asparagine glycosylation occurs at Asn-534. Asp-569 serves as the catalytic Proton donor.

Belongs to the glycosyl hydrolase 36 family. Homotetramer. It depends on Mg(2+) as a cofactor. NAD(+) is required as a cofactor.

The protein localises to the secreted. It catalyses the reaction Hydrolysis of terminal, non-reducing alpha-D-galactose residues in alpha-D-galactosides, including galactose oligosaccharides, galactomannans and galactolipids.. Functionally, hydrolyzes a variety of simple alpha-D-galactoside as well as more complex molecules such as oligosaccharides and polysaccharides. The sequence is that of Probable alpha-galactosidase C (aglC) from Aspergillus terreus (strain NIH 2624 / FGSC A1156).